The primary structure comprises 30 residues: ATP-dependent Clp protease ATP-binding subunit ClpA homolog (30 aa).

Belongs to the ClpA/ClpB family.

The protein resides in the plastid. Its subcellular location is the chloroplast. In terms of biological role, may interact with a ClpP-like protease involved in degradation of denatured proteins in the chloroplast. The protein is ATP-dependent Clp protease ATP-binding subunit ClpA homolog of Pinus pinaster (Maritime pine).